The following is a 315-amino-acid chain: MRQNNNITEFVLLGFSQDPGVQKALFVMFLLTYLVTVVGNLLIVVDIIASPSLGSPMYFFLACLSFIDAAYSTTISPKLIVGLFCDKKTISFQGCMGQLFIDHFFGGAEVFLLVVMACDRYVAICKPLHYLTIMNRQVCFLLLVVAMIGGFVHSAFQIVVYSLPFCGPNVIVHFSCDMHPLLELACTDTYFIGLTVVVNSGAICMVIFNLLLISYGVILSSLKTYSQEKRGKALSTCSSGSTVVVLFFVPCIFIYVRPVSNFPTDKFMTVFYTIITHMLSPLIYTLRNSEMRNAIEKLLGKKLTIFIIGGVSVLM.

Topologically, residues Met1–Lys23 are extracellular. An N-linked (GlcNAc...) asparagine glycan is attached at Asn6. A helical transmembrane segment spans residues Ala24 to Ile47. Topologically, residues Ile48–Ser55 are cytoplasmic. A helical membrane pass occupies residues Pro56–Pro77. Topologically, residues Lys78–Gln98 are extracellular. Cysteines 95 and 186 form a disulfide. Residues Leu99–Cys118 form a helical membrane-spanning segment. Over Asp119 to Gln137 the chain is Cytoplasmic. The helical transmembrane segment at Val138–Phe156 threads the bilayer. At Gln157–Ile192 the chain is on the extracellular side. Residues Gly193 to Gly216 traverse the membrane as a helical segment. Topologically, residues Val217–Lys232 are cytoplasmic. A helical membrane pass occupies residues Ala233–Tyr255. Residues Val256 to Lys266 are Extracellular-facing. The chain crosses the membrane as a helical span at residues Phe267–Leu286. The Cytoplasmic segment spans residues Arg287–Met315.

It belongs to the G-protein coupled receptor 1 family.

It localises to the cell membrane. Odorant receptor. The sequence is that of Olfactory receptor 4A5 (OR4A5) from Homo sapiens (Human).